We begin with the raw amino-acid sequence, 150 residues long: 6,7-dimethyl-8-ribityllumazine synthase (150 aa).

5-amino-6-(D-ribitylamino)uracil-binding positions include F11, 43-45, and 67-69; these read VYD and AVI. Residue 72–73 coordinates (2S)-2-hydroxy-3-oxobutyl phosphate; the sequence is AT. Catalysis depends on H75, which acts as the Proton donor. Position 100 (L100) interacts with 5-amino-6-(D-ribitylamino)uracil. R115 contacts (2S)-2-hydroxy-3-oxobutyl phosphate.

The protein belongs to the DMRL synthase family.

It carries out the reaction (2S)-2-hydroxy-3-oxobutyl phosphate + 5-amino-6-(D-ribitylamino)uracil = 6,7-dimethyl-8-(1-D-ribityl)lumazine + phosphate + 2 H2O + H(+). Its pathway is cofactor biosynthesis; riboflavin biosynthesis; riboflavin from 2-hydroxy-3-oxobutyl phosphate and 5-amino-6-(D-ribitylamino)uracil: step 1/2. Functionally, catalyzes the formation of 6,7-dimethyl-8-ribityllumazine by condensation of 5-amino-6-(D-ribitylamino)uracil with 3,4-dihydroxy-2-butanone 4-phosphate. This is the penultimate step in the biosynthesis of riboflavin. This chain is 6,7-dimethyl-8-ribityllumazine synthase, found in Pyrobaculum aerophilum (strain ATCC 51768 / DSM 7523 / JCM 9630 / CIP 104966 / NBRC 100827 / IM2).